Reading from the N-terminus, the 391-residue chain is MTKAVIVSAARTPVGSFLGSFANLPAHELGAIVLKAVVERAGIDPSEVSETILGQVLTAAQGQNPARQAHIKVGLPRESAAWVINQVCGSGLRTVALAAQQVLLGDARIVVAGGQESMSLAPHAAYIAPGQKMGDMKMLDTMIKDGLWDAFNDYHMGTTAENVAGKWEISRAEQDQFAVASQNKAEAAQKAGKFADEIVPVTIKSRKGETVVDADEYIRHGATLEAMENVRPAFSKEGTVTAGNASGLNDGAAAVLVMTEDEAARRGLTPLARIASYATAGVDPQIMGTGPIPASRKALEKAGWSVGDLDLVEANEAFAAQAIAVNRDMGWDPSIVNVNGGAIAIGHPIGASGCRILNTLLFEMQRRDAKKGLATLCIGGGMGVALCLERP.

C88 (acyl-thioester intermediate) is an active-site residue. Catalysis depends on proton acceptor residues H347 and C377.

Belongs to the thiolase-like superfamily. Thiolase family. Homotetramer.

It is found in the cytoplasm. The enzyme catalyses 2 acetyl-CoA = acetoacetyl-CoA + CoA. It participates in metabolic intermediate biosynthesis; (R)-mevalonate biosynthesis; (R)-mevalonate from acetyl-CoA: step 1/3. The sequence is that of Acetyl-CoA acetyltransferase (phaA) from Paracoccus denitrificans.